The chain runs to 366 residues: 3-dehydroquinate synthase (366 aa).

Residues 69-74, 103-107, 127-128, Lys140, and Lys149 each bind NAD(+); these read DGEAYK, GVIGD, and TT. Glu182, His245, and His262 together coordinate Zn(2+).

This sequence belongs to the sugar phosphate cyclases superfamily. Dehydroquinate synthase family. It depends on Co(2+) as a cofactor. Requires Zn(2+) as cofactor. The cofactor is NAD(+).

Its subcellular location is the cytoplasm. The catalysed reaction is 7-phospho-2-dehydro-3-deoxy-D-arabino-heptonate = 3-dehydroquinate + phosphate. It participates in metabolic intermediate biosynthesis; chorismate biosynthesis; chorismate from D-erythrose 4-phosphate and phosphoenolpyruvate: step 2/7. Functionally, catalyzes the conversion of 3-deoxy-D-arabino-heptulosonate 7-phosphate (DAHP) to dehydroquinate (DHQ). In Pseudomonas fluorescens (strain ATCC BAA-477 / NRRL B-23932 / Pf-5), this protein is 3-dehydroquinate synthase.